The primary structure comprises 72 residues: Crustacean hyperglycemic hormone (72 aa).

Cystine bridges form between Cys7–Cys43, Cys23–Cys39, and Cys26–Cys52. At Val72 the chain carries Valine amide.

Its subcellular location is the secreted. Its function is as follows. Hormone found in the sinus gland of isopods and decapods which controls the blood sugar level. Has a secretagogue action over the amylase released from the midgut gland. May act as a stress hormone and may be involved in the control of molting and reproduction. In Penaeus schmitti (White shrimp), this protein is Crustacean hyperglycemic hormone.